The primary structure comprises 660 residues: Bifunctional polymyxin resistance protein ArnA (660 aa).

The formyltransferase ArnAFT stretch occupies residues 1 to 304 (MKTVVFAYHD…TLGLVQGSRL (304 aa)). 86–88 (HLI) serves as a coordination point for (6R)-10-formyltetrahydrofolate. His104 serves as the catalytic Proton donor; for formyltransferase activity. Residues Arg114 and 136 to 140 (VKRAD) contribute to the (6R)-10-formyltetrahydrofolate site. The dehydrogenase ArnADH stretch occupies residues 314–660 (RRTRVLILGV…RTVDLTDKPS (347 aa)). NAD(+)-binding positions include Asp347 and 368–369 (DI). Residues Ala393, Tyr398, and 432–433 (TS) contribute to the UDP-alpha-D-glucuronate site. Glu434 functions as the Proton acceptor; for decarboxylase activity in the catalytic mechanism. UDP-alpha-D-glucuronate-binding positions include Arg460, Asn492, 526–535 (KLIDGGKQKR), and Tyr613. Arg619 acts as the Proton donor; for decarboxylase activity in catalysis.

It in the N-terminal section; belongs to the Fmt family. UDP-L-Ara4N formyltransferase subfamily. The protein in the C-terminal section; belongs to the NAD(P)-dependent epimerase/dehydratase family. UDP-glucuronic acid decarboxylase subfamily. In terms of assembly, homohexamer, formed by a dimer of trimers.

It carries out the reaction UDP-alpha-D-glucuronate + NAD(+) = UDP-beta-L-threo-pentopyranos-4-ulose + CO2 + NADH. The catalysed reaction is UDP-4-amino-4-deoxy-beta-L-arabinose + (6R)-10-formyltetrahydrofolate = UDP-4-deoxy-4-formamido-beta-L-arabinose + (6S)-5,6,7,8-tetrahydrofolate + H(+). It participates in nucleotide-sugar biosynthesis; UDP-4-deoxy-4-formamido-beta-L-arabinose biosynthesis; UDP-4-deoxy-4-formamido-beta-L-arabinose from UDP-alpha-D-glucuronate: step 1/3. The protein operates within nucleotide-sugar biosynthesis; UDP-4-deoxy-4-formamido-beta-L-arabinose biosynthesis; UDP-4-deoxy-4-formamido-beta-L-arabinose from UDP-alpha-D-glucuronate: step 3/3. Its pathway is bacterial outer membrane biogenesis; lipopolysaccharide biosynthesis. Its function is as follows. Bifunctional enzyme that catalyzes the oxidative decarboxylation of UDP-glucuronic acid (UDP-GlcUA) to UDP-4-keto-arabinose (UDP-Ara4O) and the addition of a formyl group to UDP-4-amino-4-deoxy-L-arabinose (UDP-L-Ara4N) to form UDP-L-4-formamido-arabinose (UDP-L-Ara4FN). The modified arabinose is attached to lipid A and is required for resistance to polymyxin and cationic antimicrobial peptides. In Escherichia coli (strain K12 / MC4100 / BW2952), this protein is Bifunctional polymyxin resistance protein ArnA.